A 141-amino-acid chain; its full sequence is Large ribosomal subunit protein uL16 (141 aa).

Belongs to the universal ribosomal protein uL16 family. As to quaternary structure, part of the 50S ribosomal subunit.

In terms of biological role, binds 23S rRNA and is also seen to make contacts with the A and possibly P site tRNAs. The chain is Large ribosomal subunit protein uL16 from Geobacillus kaustophilus (strain HTA426).